Reading from the N-terminus, the 488-residue chain is GTPase Der (488 aa).

The region spanning 3 to 166 (PVVALVGRPN…YALAPYAEAL (164 aa)) is the EngA-type G 1 domain. GTP is bound by residues 9–16 (GRPNVGKS), 56–60 (DTGGI), and 118–121 (NKVD). A disordered region spans residues 168–191 (LNRDGDEDEDEEEREYSEEEAEAE). The span at 172–189 (GDEDEDEEEREYSEEEAE) shows a compositional bias: acidic residues. The region spanning 200 to 373 (IKMAIIGKPN…SVQEAYDSAT (174 aa)) is the EngA-type G 2 domain. GTP is bound by residues 206-213 (GKPNVGKS), 253-257 (DTAGV), and 318-321 (NKWD). A KH-like domain is found at 374-458 (RRVSTSMLTR…PIQIRFQDSA (85 aa)).

It belongs to the TRAFAC class TrmE-Era-EngA-EngB-Septin-like GTPase superfamily. EngA (Der) GTPase family. In terms of assembly, associates with the 50S ribosomal subunit.

Its function is as follows. GTPase that plays an essential role in the late steps of ribosome biogenesis. The protein is GTPase Der of Shewanella sediminis (strain HAW-EB3).